The chain runs to 473 residues: ATP synthase subunit beta (473 aa).

Position 158-165 (158-165) interacts with ATP; sequence GGAGVGKT.

It belongs to the ATPase alpha/beta chains family. F-type ATPases have 2 components, CF(1) - the catalytic core - and CF(0) - the membrane proton channel. CF(1) has five subunits: alpha(3), beta(3), gamma(1), delta(1), epsilon(1). CF(0) has three main subunits: a(1), b(2) and c(9-12). The alpha and beta chains form an alternating ring which encloses part of the gamma chain. CF(1) is attached to CF(0) by a central stalk formed by the gamma and epsilon chains, while a peripheral stalk is formed by the delta and b chains.

The protein localises to the cell membrane. The catalysed reaction is ATP + H2O + 4 H(+)(in) = ADP + phosphate + 5 H(+)(out). Produces ATP from ADP in the presence of a proton gradient across the membrane. The catalytic sites are hosted primarily by the beta subunits. This Bacillus licheniformis (strain ATCC 14580 / DSM 13 / JCM 2505 / CCUG 7422 / NBRC 12200 / NCIMB 9375 / NCTC 10341 / NRRL NRS-1264 / Gibson 46) protein is ATP synthase subunit beta.